A 215-amino-acid polypeptide reads, in one-letter code: Variable small protein 2 (215 aa).

The N-terminal stretch at 1–18 is a signal peptide; that stretch reads MRKRISAIIMTLFMVFMS. Residue Cys-19 is the site of N-palmitoyl cysteine attachment. Cys-19 is lipidated: S-diacylglycerol cysteine.

This sequence belongs to the variable small protein (Vsp) family.

The protein resides in the cell outer membrane. Its function is as follows. The Vlp and Vsp proteins are antigenically distinct proteins, only one vlp or vsp gene is transcriptionally active at any one time. Switching between these genes is a mechanism of host immune response evasion. In Borrelia hermsii, this protein is Variable small protein 2.